Consider the following 91-residue polypeptide: Ribonuclease P protein component 4 (91 aa).

C55, C58, C78, and C81 together coordinate Zn(2+).

It belongs to the eukaryotic/archaeal RNase P protein component 4 family. Consists of a catalytic RNA component and at least 4-5 protein subunits. Requires Zn(2+) as cofactor.

The protein localises to the cytoplasm. The catalysed reaction is Endonucleolytic cleavage of RNA, removing 5'-extranucleotides from tRNA precursor.. Its function is as follows. Part of ribonuclease P, a protein complex that generates mature tRNA molecules by cleaving their 5'-ends. The polypeptide is Ribonuclease P protein component 4 (Thermoplasma acidophilum (strain ATCC 25905 / DSM 1728 / JCM 9062 / NBRC 15155 / AMRC-C165)).